We begin with the raw amino-acid sequence, 461 residues long: Cysteine--tRNA ligase (461 aa).

A Zn(2+)-binding site is contributed by Cys-29. Positions 31 to 41 (MTVYDLCHLGH) match the 'HIGH' region motif. The Zn(2+) site is built by Cys-213, His-238, and Glu-242. Positions 270–274 (KMSKS) match the 'KMSKS' region motif. Position 273 (Lys-273) interacts with ATP.

This sequence belongs to the class-I aminoacyl-tRNA synthetase family. In terms of assembly, monomer. Zn(2+) is required as a cofactor.

Its subcellular location is the cytoplasm. The catalysed reaction is tRNA(Cys) + L-cysteine + ATP = L-cysteinyl-tRNA(Cys) + AMP + diphosphate. This Delftia acidovorans (strain DSM 14801 / SPH-1) protein is Cysteine--tRNA ligase.